A 305-amino-acid polypeptide reads, in one-letter code: Ribosomal protein L11 methyltransferase (305 aa).

Residues Thr152, Gly173, Asp195, and Asn237 each coordinate S-adenosyl-L-methionine.

It belongs to the methyltransferase superfamily. PrmA family.

The protein resides in the cytoplasm. It catalyses the reaction L-lysyl-[protein] + 3 S-adenosyl-L-methionine = N(6),N(6),N(6)-trimethyl-L-lysyl-[protein] + 3 S-adenosyl-L-homocysteine + 3 H(+). Functionally, methylates ribosomal protein L11. This chain is Ribosomal protein L11 methyltransferase, found in Hamiltonella defensa subsp. Acyrthosiphon pisum (strain 5AT).